Reading from the N-terminus, the 156-residue chain is Small ribosomal subunit protein uS7 (156 aa).

Belongs to the universal ribosomal protein uS7 family. As to quaternary structure, part of the 30S ribosomal subunit. Contacts proteins S9 and S11.

Functionally, one of the primary rRNA binding proteins, it binds directly to 16S rRNA where it nucleates assembly of the head domain of the 30S subunit. Is located at the subunit interface close to the decoding center, probably blocks exit of the E-site tRNA. This is Small ribosomal subunit protein uS7 from Prochlorococcus marinus (strain NATL2A).